Consider the following 333-residue polypeptide: DNA-directed RNA polymerase subunit alpha (333 aa).

Residues 1–246 (MEKFIKINWT…AHLNIIGDVN (246 aa)) form an alpha N-terminal domain (alpha-NTD) region. Residues 263–333 (HSKTQNILIQ…YNVFLDKGEE (71 aa)) form an alpha C-terminal domain (alpha-CTD) region.

This sequence belongs to the RNA polymerase alpha chain family. In terms of assembly, homodimer. The RNAP catalytic core consists of 2 alpha, 1 beta, 1 beta' and 1 omega subunit. When a sigma factor is associated with the core the holoenzyme is formed, which can initiate transcription.

It catalyses the reaction RNA(n) + a ribonucleoside 5'-triphosphate = RNA(n+1) + diphosphate. Functionally, DNA-dependent RNA polymerase catalyzes the transcription of DNA into RNA using the four ribonucleoside triphosphates as substrates. The polypeptide is DNA-directed RNA polymerase subunit alpha (Mycoplasma mobile (strain ATCC 43663 / 163K / NCTC 11711) (Mesomycoplasma mobile)).